Reading from the N-terminus, the 446-residue chain is N-succinylarginine dihydrolase (446 aa).

Substrate contacts are provided by residues 19-28, Asn-110, and 137-138; these read AGLSFGNVAS and HR. Residue Glu-174 is part of the active site. Arg-213 is a substrate binding site. The active site involves His-249. Substrate contacts are provided by Asp-251 and Asn-364. Cys-370 acts as the Nucleophile in catalysis.

The protein belongs to the succinylarginine dihydrolase family. Homodimer.

It catalyses the reaction N(2)-succinyl-L-arginine + 2 H2O + 2 H(+) = N(2)-succinyl-L-ornithine + 2 NH4(+) + CO2. It participates in amino-acid degradation; L-arginine degradation via AST pathway; L-glutamate and succinate from L-arginine: step 2/5. Catalyzes the hydrolysis of N(2)-succinylarginine into N(2)-succinylornithine, ammonia and CO(2). The sequence is that of N-succinylarginine dihydrolase from Burkholderia pseudomallei (strain 668).